A 254-amino-acid chain; its full sequence is Fluoride-specific ion channel FluC 1 (254 aa).

A run of 3 helical transmembrane segments spans residues 19–39 (LDIL…TALY), 51–71 (IIGM…YGSV), and 80–100 (AFLI…VAVL). 2 residues coordinate Na(+): Gly58 and Ser61.

This sequence belongs to the fluoride channel Fluc/FEX (TC 1.A.43) family.

The protein resides in the cell inner membrane. It catalyses the reaction fluoride(in) = fluoride(out). With respect to regulation, na(+) is not transported, but it plays an essential structural role and its presence is essential for fluoride channel function. In terms of biological role, fluoride-specific ion channel. Important for reducing fluoride concentration in the cell, thus reducing its toxicity. The polypeptide is Fluoride-specific ion channel FluC 1 (Brucella suis biovar 1 (strain 1330)).